Consider the following 408-residue polypeptide: Peptidase T (408 aa).

His78 serves as a coordination point for Zn(2+). Asp80 is a catalytic residue. Asp140 is a Zn(2+) binding site. The active-site Proton acceptor is the Glu173. Residues Glu174, Asp196, and His379 each coordinate Zn(2+).

The protein belongs to the peptidase M20B family. The cofactor is Zn(2+).

The protein localises to the cytoplasm. The catalysed reaction is Release of the N-terminal residue from a tripeptide.. Cleaves the N-terminal amino acid of tripeptides. The sequence is that of Peptidase T from Shigella boydii serotype 18 (strain CDC 3083-94 / BS512).